Here is a 511-residue protein sequence, read N- to C-terminus: MAIPKAHYSLAVLVLLFVVVSSSQKVCNPECKAKEPFHCDNTHAFNRTGFPRNFTFGAATSAYQIEGAAHRALNGWDYFTHRYPEKVPDRSSGDLACDSYDLYKDDVKLLKRMNVQAYRLSIAWSRVLPKGRLTGGVDENGITYYNNLINELKANGIEPYVTIFHWDVPQTLEDEYGGFLSTRIVEDYTNYAELLFQRFGDRVKFWITLNQPFSLATKGYGDGSYPPGRCTGCELGGDSGVEPYTVAHNQLLAHAKTVSLYRKRYQKFQGGKIGTTLIGRWFAPLNEFSELDKAAAKRAFDFFVGWFLDPLVYGKYPTIMREMVGDRLPEFTPEQSALVKGSLDFLGLNYYVTQYATDAPPPTQLNAITDARVTLGFYRNGVPIGVVAPSFVYYPPGFRQILNYIKDNYKNPLTYITENGVADLDLGNVTLATALADNGRIQNHCSHLSCLKCAMKDGCNVAGYFAWSLMDNYEFGNGYTLRFGMNWVNFTNPADRKEKASGKWFSKFLAK.

An N-terminal signal peptide occupies residues 1–23 (MAIPKAHYSLAVLVLLFVVVSSS). Disulfide bonds link Cys-31/Cys-450, Cys-39/Cys-445, and Cys-230/Cys-233. Residues Asn-46 and Asn-53 are each glycosylated (N-linked (GlcNAc...) asparagine). A beta-D-glucoside-binding positions include Gln-64, His-165, and 210–211 (NQ). A beta-D-glucoside-binding residues include Tyr-351 and Glu-418. Glu-418 acts as the Nucleophile in catalysis. The N-linked (GlcNAc...) asparagine glycan is linked to Asn-428. A beta-D-glucoside-binding positions include Trp-467, 474–475 (EF), and Phe-483. An N-linked (GlcNAc...) asparagine glycan is attached at Asn-489.

This sequence belongs to the glycosyl hydrolase 1 family. In terms of tissue distribution, specifically expressed in roots.

It carries out the reaction a thioglucoside + H2O = a sugar + a thiol.. The catalysed reaction is Hydrolysis of terminal, non-reducing beta-D-glucosyl residues with release of beta-D-glucose.. Functionally, hydrolyzes sinigrin and, with lower efficiency, p-nitrophenyl beta-D-glucoside. The chain is Myrosinase 4 from Arabidopsis thaliana (Mouse-ear cress).